The primary structure comprises 191 residues: uncharacterized protein (191 aa).

Positions 87–184 constitute a Fe2OG dioxygenase domain; that stretch reads EFDSALIFHY…RIAITFRQMG (98 aa).

This is an uncharacterized protein from Acanthamoeba polyphaga mimivirus (APMV).